An 88-amino-acid polypeptide reads, in one-letter code: Small ribosomal subunit protein bS20 (88 aa).

This sequence belongs to the bacterial ribosomal protein bS20 family.

In terms of biological role, binds directly to 16S ribosomal RNA. The chain is Small ribosomal subunit protein bS20 from Clostridium novyi (strain NT).